A 788-amino-acid chain; its full sequence is MVRTKNQSSSSSASSSSHKSPIKSHGGSGSAAAGTAGHPVSRSSSSHRTSIDDRKSATNVSSSSNRRTTPGSSPDGDGDDDTTTTDDLTPTSTSAPRSAGGPSSVHKQNLYVVSFPIIFLFNVLRSLIYQLFCIFRYLYGASTKVIYRPHRRDCNIEIVVQNNSNNKDQKHQQLTSSQSLNYPLEVTSGEAASEQQVQQPLPQQRYRALQPLEMAGANRSGSGYSPGPGDPLLAKQKHHHRRAFEYISKALKIDEENEGHKELAIELYRKGIKELEDGIAVDCWSGRGDVWDRAQRLHDKMQTNLSMARDRLHFLALREEDFQMHRLSLKEEQKPNPSREQHQKPQKAREAADKPMLTNLTNDPVKLKTRSSGYGPKNGLTTPRISATATTPTSSSSLASGRKLTIGTKRPGNLAVAANKSQTLPRNLGSKTSVGAVRQPGKTAATPPAVRRQFSSGRNTPPQRSRTPINNNGASGSGSGASTPVVTVKGVEQKLVQLILDEIVEGGAKVEWTDIAGQEVAKQALQEMVILPSVRPELFTGLRAPAKGLLLFGPPGNGKTLLARAVATECSATFLNISAASLTSKYVGDGEKLVRALFAVARHLQPSIIFIDEVDSLLSERSSGEHEASRRLKTEFLVEFDGLPGNPDGDRIVVLAATNRPQELDEAALRRFTKRVYVSLPDEQTRELLLNRLLQKQGSPLDTDALRRLSKITDGYSGSDLTALAKDAALEPIRELNVEQVKCLDINAMRHITEKDFHNSLKRIRRSVAQQSLSSYEKWSSDYGDITI.

A disordered region spans residues 1-105 (MVRTKNQSSS…PRSAGGPSSV (105 aa)). At 1 to 116 (MVRTKNQSSS…KQNLYVVSFP (116 aa)) the chain is on the cytoplasmic side. Positions 1-227 (MVRTKNQSSS…NRSGSGYSPG (227 aa)) are required for localization to punctate cytoplasmic foci. Low complexity-rich tracts occupy residues 8–48 (SSSS…SSHR) and 57–75 (ATNVSSSSNRRTTPGSSPD). An intramembrane region (helical) is located at residues 117–137 (IIFLFNVLRSLIYQLFCIFRY). Residues 138–788 (LYGASTKVIY…WSSDYGDITI (651 aa)) are Cytoplasmic-facing. Positions 227-788 (GPGDPLLAKQ…WSSDYGDITI (562 aa)) are sufficient for interaction with microtubules and microtubule severing. Residues 240 to 315 (HRRAFEYISK…SMARDRLHFL (76 aa)) enclose the MIT domain. The span at 330–353 (KEEQKPNPSREQHQKPQKAREAAD) shows a compositional bias: basic and acidic residues. The interval 330-484 (KEEQKPNPSR…SGSGSGASTP (155 aa)) is disordered. The segment covering 380–400 (LTTPRISATATTPTSSSSLAS) has biased composition (low complexity). Polar residues-rich tracts occupy residues 419–433 (NKSQTLPRNLGSKTS) and 453–469 (QFSSGRNTPPQRSRTPI). The interval 471–485 (NNGASGSGSGASTPV) is required for interaction with microtubules. Residue 553-560 (GPPGNGKT) participates in ATP binding.

Belongs to the AAA ATPase family. Spastin subfamily. As to quaternary structure, homohexamer. The homohexamer is stabilized by ATP-binding. The homohexamer may adopt a ring conformation through which microtubules pass prior to being severed. Interacts with microtubules. Interacts with atl; may be involved in microtubule dynamics.

The protein localises to the membrane. It is found in the cytoplasm. Its subcellular location is the cytoskeleton. The protein resides in the microtubule organizing center. It localises to the centrosome. The protein localises to the chromosome. It is found in the lipid droplet. The catalysed reaction is n ATP + n H2O + a microtubule = n ADP + n phosphate + (n+1) alpha/beta tubulin heterodimers.. Functionally, ATP-dependent microtubule severing protein. Stimulates microtubule minus-end depolymerization and poleward microtubule flux in the mitotic spindle. Regulates microtubule stability in the neuromuscular junction synapse. Involved in lipid metabolism by regulating the size and distribution of lipid droplets. Involved in axon regeneration by regulating microtubule severing. This chain is Spastin, found in Drosophila pseudoobscura pseudoobscura (Fruit fly).